Reading from the N-terminus, the 610-residue chain is MGNTCVGPSRNGFLQSVSAAMWRPRDGDDSASMSNGDIASEAVSGELRSRLSDEVQNKPPEQVTMPKPGTDVETKDREIRTESKPETLEEISLESKPETKQETKSETKPESKPDPPAKPKKPKHMKRVSSAGLRTESVLQRKTENFKEFYSLGRKLGQGQFGTTFLCVEKTTGKEFACKSIAKRKLLTDEDVEDVRREIQIMHHLAGHPNVISIKGAYEDVVAVHLVMECCAGGELFDRIIQRGHYTERKAAELTRTIVGVVEACHSLGVMHRDLKPENFLFVSKHEDSLLKTIDFGLSMFFKPDDVFTDVVGSPYYVAPEVLRKRYGPEADVWSAGVIVYILLSGVPPFWAETEQGIFEQVLHGDLDFSSDPWPSISESAKDLVRKMLVRDPKKRLTAHQVLCHPWVQVDGVAPDKPLDSAVLSRMKQFSAMNKFKKMALRVIAESLSEEEIAGLKEMFNMIDADKSGQITFEELKAGLKRVGANLKESEILDLMQAADVDNSGTIDYKEFIAATLHLNKIEREDHLFAAFTYFDKDGSGYITPDELQQACEEFGVEDVRIEELMRDVDQDNDGRIDYNEFVAMMQKGSITGGPVKMGLEKSFSIALKL.

Residue G2 is the site of N-myristoyl glycine attachment. C5 carries S-palmitoyl cysteine lipidation. The segment at 17–133 (VSAAMWRPRD…HMKRVSSAGL (117 aa)) is disordered. Basic and acidic residues-rich tracts occupy residues 47–56 (LRSRLSDEVQ) and 70–117 (TDVE…DPPA). A compositionally biased stretch (basic residues) spans 118–127 (KPKKPKHMKR). The Protein kinase domain occupies 150 to 408 (YSLGRKLGQG…AHQVLCHPWV (259 aa)). ATP is bound by residues 156–164 (LGQGQFGTT) and K179. D274 functions as the Proton acceptor in the catalytic mechanism. S314 is modified (phosphoserine). Positions 414 to 444 (APDKPLDSAVLSRMKQFSAMNKFKKMALRVI) are autoinhibitory domain. EF-hand domains lie at 451–486 (EEIA…VGAN), 487–522 (LKES…LNKI), 523–558 (ERED…FGVE), and 559–592 (DVRI…GSIT). 20 residues coordinate Ca(2+): D464, D466, S468, Q470, E475, D500, D502, S504, T506, E511, D536, D538, S540, Y542, E547, D570, D572, D574, R576, and E581.

Belongs to the protein kinase superfamily. Ser/Thr protein kinase family. CDPK subfamily. Interacts with 14-3-3 proteins.

It localises to the peroxisome membrane. It catalyses the reaction L-seryl-[protein] + ATP = O-phospho-L-seryl-[protein] + ADP + H(+). The catalysed reaction is L-threonyl-[protein] + ATP = O-phospho-L-threonyl-[protein] + ADP + H(+). Activated by calcium. Autophosphorylation may play an important role in the regulation of the kinase activity. In terms of biological role, may play a role in signal transduction pathways that involve calcium as a second messenger. Phosphorylates the Ca(2+)-ATPase ACA2 resulting in the inhibition of its calcium activation. This chain is Calcium-dependent protein kinase 1 (CPK1), found in Arabidopsis thaliana (Mouse-ear cress).